A 1047-amino-acid chain; its full sequence is Jouberin (1047 aa).

3 stretches are compositionally biased toward basic and acidic residues: residues 1 to 17, 29 to 40, and 77 to 86; these read MEPE…EKVR, SREKTGIEEKGE, and LLHDDKLASE. Disordered stretches follow at residues 1–40 and 67–181; these read MEPE…EKGE and EQLT…SRDS. The interaction with HAP1 stretch occupies residues 1–284; that stretch reads MEPETPEKVD…IFNENFPYLL (284 aa). Residues 96 to 106 show a composition bias toward low complexity; it reads PVPTKPESSPS. The segment covering 115–138 has biased composition (basic and acidic residues); it reads GEQKKEGTPEDSQHMEGICSREQD. Residues 149–159 are compositionally biased toward basic residues; the sequence is PKPKKTKKKTK. Residues 172-181 are compositionally biased toward basic and acidic residues; it reads GVHEITSRDS. WD repeat units lie at residues 457–499, 502–541, 545–585, 592–631, 648–687, 691–730, and 735–776; these read AGER…FMRE, GHLN…TSTF, PHPS…DAAI, VHKS…NDVQ, FRGV…ARKF, ANYR…QVAM, and PFKS…AQQE. At serine 853 the chain carries Phosphoserine. In terms of domain architecture, SH3 spans 902–962; sequence DPPPMVVALY…PANHVASETL (61 aa). 2 stretches are compositionally biased toward basic and acidic residues: residues 963-987 and 1013-1040; these read YRDS…KPEK and HSEK…EPVV. The segment at 963–1047 is disordered; it reads YRDSPPKVKE…PVVRKVTLIE (85 aa). The residue at position 974 (serine 974) is a Phosphoserine.

In terms of assembly, self-associates. Part of the tectonic-like complex (also named B9 complex). Interacts with MKS1. Interacts with NPHP1; probably as heterodimers and/or AHI1(2):NPHP1(2) heterotetramers. Interacts (via SH3 domain) with the dynamin GTPase DNM2. Interacts with HAP1; probably as AHI1(2):HAP1(2) heterotetramers. Interacts with RAB8A. Interacts with CEND1. Interacts with SPATA7. Expressed in the retina (at protein level). Highly expressed in the brain. Highly expressed in the testis. Expressed in the kidney, thymus, heart, lung, spleen. Weakly expressed in the liver, stomach, pancreas, and embryo. Strongly expressed during periods of both cortical and cerebellar development.

It is found in the cytoplasm. Its subcellular location is the cytoskeleton. The protein localises to the cilium basal body. It localises to the microtubule organizing center. The protein resides in the centrosome. It is found in the centriole. Its subcellular location is the cell junction. The protein localises to the adherens junction. Its function is as follows. Involved in vesicle trafficking and required for ciliogenesis, formation of primary non-motile cilium, and recruitment of RAB8A to the basal body of primary cilium. Component of the tectonic-like complex, a complex localized at the transition zone of primary cilia and acting as a barrier that prevents diffusion of transmembrane proteins between the cilia and plasma membranes. Involved in neuronal differentiation. As a positive modulator of classical Wnt signaling, may play a crucial role in ciliary signaling during cerebellum embryonic development. The sequence is that of Jouberin (Ahi1) from Mus musculus (Mouse).